We begin with the raw amino-acid sequence, 1061 residues long: Translation initiation factor IF-2 (1061 aa).

2 disordered regions span residues phenylalanine 51–lysine 199 and alanine 250–glutamate 460. Positions asparagine 67 to arginine 77 are enriched in basic and acidic residues. 5 stretches are compositionally biased toward low complexity: residues valine 97–valine 113, arginine 120–alanine 130, valine 167–valine 177, threonine 184–lysine 199, and alanine 250–proline 278. Residues proline 279–proline 291 are compositionally biased toward pro residues. Residues serine 340–glycine 360 are compositionally biased toward gly residues. Residues glycine 381 to glycine 391 are compositionally biased toward low complexity. Positions glutamine 392–alanine 405 are enriched in gly residues. The region spanning serine 552–lysine 728 is the tr-type G domain. Positions glycine 561–threonine 568 are G1. GTP is bound at residue glycine 561–threonine 568. The G2 stretch occupies residues glycine 586–histidine 590. The tract at residues aspartate 614–glycine 617 is G3. GTP contacts are provided by residues aspartate 614 to histidine 618 and asparagine 668 to aspartate 671. Positions asparagine 668–aspartate 671 are G4. The segment at serine 704 to lysine 706 is G5.

It belongs to the TRAFAC class translation factor GTPase superfamily. Classic translation factor GTPase family. IF-2 subfamily.

The protein localises to the cytoplasm. Functionally, one of the essential components for the initiation of protein synthesis. Protects formylmethionyl-tRNA from spontaneous hydrolysis and promotes its binding to the 30S ribosomal subunits. Also involved in the hydrolysis of GTP during the formation of the 70S ribosomal complex. The chain is Translation initiation factor IF-2 from Acidobacterium capsulatum (strain ATCC 51196 / DSM 11244 / BCRC 80197 / JCM 7670 / NBRC 15755 / NCIMB 13165 / 161).